A 1396-amino-acid polypeptide reads, in one-letter code: DNA-directed RNA polymerase subunit beta' (1396 aa).

Zn(2+)-binding residues include cysteine 72, cysteine 74, cysteine 87, and cysteine 90. Mg(2+)-binding residues include aspartate 463, aspartate 465, and aspartate 467. 4 residues coordinate Zn(2+): cysteine 814, cysteine 889, cysteine 896, and cysteine 899.

It belongs to the RNA polymerase beta' chain family. In terms of assembly, the RNAP catalytic core consists of 2 alpha, 1 beta, 1 beta' and 1 omega subunit. When a sigma factor is associated with the core the holoenzyme is formed, which can initiate transcription. It depends on Mg(2+) as a cofactor. Zn(2+) serves as cofactor.

It catalyses the reaction RNA(n) + a ribonucleoside 5'-triphosphate = RNA(n+1) + diphosphate. DNA-dependent RNA polymerase catalyzes the transcription of DNA into RNA using the four ribonucleoside triphosphates as substrates. The chain is DNA-directed RNA polymerase subunit beta' from Chlamydia trachomatis serovar A (strain ATCC VR-571B / DSM 19440 / HAR-13).